The following is a 269-amino-acid chain: Dihydropteroate synthase (269 aa).

Positions 14 to 261 (TYIMGILNFT…DVLENSRAAK (248 aa)) constitute a Pterin-binding domain. Residue asparagine 21 coordinates Mg(2+). (7,8-dihydropterin-6-yl)methyl diphosphate is bound by residues threonine 61, aspartate 95, asparagine 114, aspartate 178, lysine 214, and 249–251 (RVH).

This sequence belongs to the DHPS family. Mg(2+) is required as a cofactor.

It catalyses the reaction (7,8-dihydropterin-6-yl)methyl diphosphate + 4-aminobenzoate = 7,8-dihydropteroate + diphosphate. It participates in cofactor biosynthesis; tetrahydrofolate biosynthesis; 7,8-dihydrofolate from 2-amino-4-hydroxy-6-hydroxymethyl-7,8-dihydropteridine diphosphate and 4-aminobenzoate: step 1/2. Its function is as follows. Catalyzes the condensation of para-aminobenzoate (pABA) with 6-hydroxymethyl-7,8-dihydropterin diphosphate (DHPt-PP) to form 7,8-dihydropteroate (H2Pte), the immediate precursor of folate derivatives. The polypeptide is Dihydropteroate synthase (Clostridium beijerinckii (strain ATCC 51743 / NCIMB 8052) (Clostridium acetobutylicum)).